Reading from the N-terminus, the 179-residue chain is GTP-dependent dephospho-CoA kinase (179 aa).

5 residues coordinate GTP: Asp55, Val57, Asp74, Lys76, and Glu128.

This sequence belongs to the GTP-dependent DPCK family.

The enzyme catalyses 3'-dephospho-CoA + GTP = GDP + CoA + H(+). Its pathway is cofactor biosynthesis; coenzyme A biosynthesis. In terms of biological role, catalyzes the GTP-dependent phosphorylation of the 3'-hydroxyl group of dephosphocoenzyme A to form coenzyme A (CoA). The polypeptide is GTP-dependent dephospho-CoA kinase (Saccharolobus islandicus (strain M.16.4 / Kamchatka #3) (Sulfolobus islandicus)).